A 476-amino-acid polypeptide reads, in one-letter code: Mitochondrial-processing peptidase subunit beta (476 aa).

The transit peptide at 1–28 directs the protein to the mitochondrion; the sequence is MASRRLALNLAQGVKARAGGVINPFRRG. His-84 serves as a coordination point for Zn(2+). The Proton acceptor role is filled by Glu-87. Zn(2+) is bound by residues His-88 and Glu-164.

The protein belongs to the peptidase M16 family. In terms of assembly, heterodimer of mpp (alpha) and pep (beta) subunits, forming the mitochondrial processing protease (MPP) in which mpp is involved in substrate recognition and binding and pep is the catalytic subunit. Component of the ubiquinol-cytochrome c oxidoreductase (cytochrome b-c1 complex, complex III, CIII), a multisubunit enzyme composed of 10 subunits. The complex is composed of 3 respiratory subunits cytochrome b (cob), cytochrome c1 (cyt-1) and Rieske protein (fes-1), 2 core protein subunits pep and ucr-1, and 5 low-molecular weight protein subunits qcr6, qcr7, qcr8, qcr9 and probably NCU16844/qcr10. The complex exists as an obligatory dimer and forms supercomplexes (SCs) in the inner mitochondrial membrane with NADH-ubiquinone oxidoreductase (complex I, CI) and cytochrome c oxidase (complex IV, CIV), resulting in different assemblies (supercomplexes SCI(1)III(2), SCIII(2)IV(1) and SCIII(2)IV(2) as well as higher order I(x)III(y)IV(z) megacomplexes). Zn(2+) is required as a cofactor.

The protein localises to the mitochondrion matrix. It localises to the mitochondrion inner membrane. It carries out the reaction Release of N-terminal transit peptides from precursor proteins imported into the mitochondrion, typically with Arg in position P2.. Its activity is regulated as follows. Binding to mpp is required for catalytic activity. Inhibited by metal chelator ethylenediaminetetraacetic acid (EDTA). Catalytic subunit of the essential mitochondrial processing protease (MPP), which cleaves the mitochondrial sequence off newly imported precursors proteins. Preferentially, cleaves after an arginine at position P2. Functionally, component of the ubiquinol-cytochrome c oxidoreductase, a multisubunit transmembrane complex that is part of the mitochondrial electron transport chain which drives oxidative phosphorylation. The respiratory chain contains 3 multisubunit complexes succinate dehydrogenase (complex II, CII), ubiquinol-cytochrome c oxidoreductase (cytochrome b-c1 complex, complex III, CIII) and cytochrome c oxidase (complex IV, CIV), that cooperate to transfer electrons derived from NADH and succinate to molecular oxygen, creating an electrochemical gradient over the inner membrane that drives transmembrane transport and the ATP synthase. The cytochrome b-c1 complex catalyzes electron transfer from ubiquinol to cytochrome c, linking this redox reaction to translocation of protons across the mitochondrial inner membrane, with protons being carried across the membrane as hydrogens on the quinol. In the process called Q cycle, 2 protons are consumed from the matrix, 4 protons are released into the intermembrane space and 2 electrons are passed to cytochrome c. The polypeptide is Mitochondrial-processing peptidase subunit beta (Neurospora crassa (strain ATCC 24698 / 74-OR23-1A / CBS 708.71 / DSM 1257 / FGSC 987)).